A 205-amino-acid chain; its full sequence is CASP-like protein 0U1 (205 aa).

Residues 1 to 38 (MDDAPGASDEAREPLLKRVGASVEGTSLMNHRLMKNPK) lie on the Cytoplasmic side of the membrane. A helical membrane pass occupies residues 39 to 57 (FRALLVESLMALTTFSFMA). Residues 58–89 (KQTEGLAGPELSTLNDCGEAGCGFTKFYQFKG) lie on the Extracellular side of the membrane. Residues 90 to 110 (VVGVYAGFWAYTVILIAMYVI) traverse the membrane as a helical segment. At 111 to 124 (RKAPPPGTEFASYA) the chain is on the cytoplasmic side. A helical transmembrane segment spans residues 125-145 (LFTAAMATFVVMSITECASVV). The Extracellular portion of the chain corresponds to 146–159 (LSSDYYVCKNADYS). Residues 160–180 (LVSLIFAAATIVLNCLTCAFA) traverse the membrane as a helical segment. Over 181–205 (WRQWGELKFVGLPKTLSALTETYPG) the chain is Cytoplasmic.

This sequence belongs to the Casparian strip membrane proteins (CASP) family. In terms of assembly, homodimer and heterodimers.

It is found in the cell membrane. This chain is CASP-like protein 0U1, found in Ostreococcus lucimarinus (strain CCE9901).